A 104-amino-acid chain; its full sequence is Large ribosomal subunit protein uL24 (104 aa).

This sequence belongs to the universal ribosomal protein uL24 family. In terms of assembly, part of the 50S ribosomal subunit.

One of two assembly initiator proteins, it binds directly to the 5'-end of the 23S rRNA, where it nucleates assembly of the 50S subunit. In terms of biological role, one of the proteins that surrounds the polypeptide exit tunnel on the outside of the subunit. This is Large ribosomal subunit protein uL24 from Halothermothrix orenii (strain H 168 / OCM 544 / DSM 9562).